Here is a 329-residue protein sequence, read N- to C-terminus: D-lactate dehydrogenase (329 aa).

NAD(+) is bound by residues 154 to 155 (KI), aspartate 174, 205 to 206 (CP), asparagine 211, 232 to 234 (TSR), and aspartate 258. Arginine 234 is an active-site residue. Glutamate 263 is an active-site residue. The Proton donor role is filled by histidine 295.

The protein belongs to the D-isomer specific 2-hydroxyacid dehydrogenase family.

It catalyses the reaction (R)-lactate + NAD(+) = pyruvate + NADH + H(+). Fermentative lactate dehydrogenase. This chain is D-lactate dehydrogenase (ldhA), found in Escherichia coli (strain K12).